The following is a 109-amino-acid chain: Oncomodulin-2 (109 aa).

EF-hand domains follow at residues 39–74 and 78–109; these read MSAS…FESG and LTES…MVHS. Residues Asp52, Asp54, Ser56, Tyr58, Glu63, Asp91, Asp93, Asp95, Lys97, and Glu102 each coordinate Ca(2+).

It belongs to the parvalbumin family.

The chain is Oncomodulin-2 (OCM2) from Homo sapiens (Human).